A 236-amino-acid chain; its full sequence is Apoptosis regulator Bcl-2 (236 aa).

Residues 10-30 carry the BH4 motif; it reads DNREIVMKYIHYKLSQRGYEW. Thr69 is modified (phosphothreonine; by MAPK8). Ser70 carries the phosphoserine; by MAPK8 and PKC modification. At Ser84 the chain carries Phosphoserine; by MAPK8. Residues 90–104 carry the BH3 motif; the sequence is VHLTLRRAGDDFSRR. Positions 133 to 152 match the BH1 motif; that stretch reads ELFRDGVNWGRIVAFFEFGG. The short motif at 184 to 199 is the BH2 element; the sequence is TWIQDNGGWDAFVELY. A helical transmembrane segment spans residues 209 to 230; it reads FSWLSLKTLLSLALVGACITLG.

It belongs to the Bcl-2 family. In terms of assembly, forms homodimers, and heterodimers with BAX, BAD, BAK and Bcl-X(L). Heterodimerization with BAX requires intact BH1 and BH2 motifs, and is necessary for anti-apoptotic activity. Component of the complex, at least composed of LRPPRC, BECN1 and BCL2; the interactions prevent BECN1 from forming an autophagy-inducing complex with PIK3C3. Interacts with EI24. Also interacts with APAF1, BBC3, BCL2L1, BNIPL, MRPL41 and TP53BP2. Binding to FKBP8 seems to target BCL2 to the mitochondria and probably interferes with the binding of BCL2 to its targets. Interacts with BAG1 in an ATP-dependent manner. Interacts with RAF1 (the 'Ser-338' and 'Ser-339' phosphorylated form). Interacts (via the BH4 domain) with EGLN3; the interaction prevents the formation of the BAX-BCL2 complex and inhibits the anti-apoptotic activity of BCL2. Interacts with G0S2; this interaction also prevents the formation of the anti-apoptotic BAX-BCL2 complex. Interacts with RTL10/BOP. Interacts with the SCF(FBXO10) complex. Interacts (via the loop between motifs BH4 and BH3) with NLRP1 (via LRR repeats), but not with NLRP2, NLRP3, NLRP4, PYCARD, nor MEFV. Interacts with GIMAP3/IAN4, GIMAP4/IAN1 and GIMAP5/IAN5. Interacts with BCAP31. Interacts with IRF3; the interaction is inhibited by Sendai virus infection. Interacts with BECN1; thereby inhibiting autophagy in non-starvation conditions. Interacts with AMBRA1; thereby inhibiting autophagy. Phosphorylation/dephosphorylation on Ser-70 regulates anti-apoptotic activity. Growth factor-stimulated phosphorylation on Ser-70 by PKC is required for the anti-apoptosis activity and occurs during the G2/M phase of the cell cycle. In the absence of growth factors, BCL2 appears to be phosphorylated by other protein kinases such as ERKs and stress-activated kinases. Phosphorylated by MAPK8/JNK1 at Thr-69, Ser-70 and Ser-84, which stimulates starvation-induced autophagy. Dephosphorylated by protein phosphatase 2A (PP2A). In terms of processing, proteolytically cleaved by caspases during apoptosis. The cleaved protein, lacking the BH4 motif, has pro-apoptotic activity, causes the release of cytochrome c into the cytosol promoting further caspase activity. Post-translationally, monoubiquitinated by PRKN, leading to an increase in its stability. Ubiquitinated by SCF(FBXO10), leading to its degradation by the proteasome.

The protein resides in the mitochondrion outer membrane. Its subcellular location is the nucleus membrane. The protein localises to the endoplasmic reticulum membrane. It is found in the cytoplasm. Suppresses apoptosis in a variety of cell systems including factor-dependent lymphohematopoietic and neural cells. Regulates cell death by controlling the mitochondrial membrane permeability. Appears to function in a feedback loop system with caspases. Inhibits caspase activity either by preventing the release of cytochrome c from the mitochondria and/or by binding to the apoptosis-activating factor (APAF-1). Also acts as an inhibitor of autophagy: interacts with BECN1 and AMBRA1 during non-starvation conditions and inhibits their autophagy function. May attenuate inflammation by impairing NLRP1-inflammasome activation, hence CASP1 activation and IL1B release. The protein is Apoptosis regulator Bcl-2 (BCL2) of Cricetulus griseus (Chinese hamster).